A 321-amino-acid polypeptide reads, in one-letter code: D-alanine--D-alanine ligase (321 aa).

In terms of domain architecture, ATP-grasp spans 103 to 303; that stretch reads KKILTPENIP…YVALCRMIVE (201 aa). ATP is bound at residue 129–186; the sequence is PLPRPYVLKPVNEGSSVGVAIIDESFNDGQPIRKDQIDPWKNFKTLLAEPFIKGRELT. Mg(2+)-binding residues include Asp254, Glu270, and Asn272.

This sequence belongs to the D-alanine--D-alanine ligase family. It depends on Mg(2+) as a cofactor. The cofactor is Mn(2+).

It is found in the cytoplasm. It catalyses the reaction 2 D-alanine + ATP = D-alanyl-D-alanine + ADP + phosphate + H(+). The protein operates within cell wall biogenesis; peptidoglycan biosynthesis. Cell wall formation. In Zymomonas mobilis subsp. mobilis (strain ATCC 31821 / ZM4 / CP4), this protein is D-alanine--D-alanine ligase.